The sequence spans 553 residues: Keratin, type II cytoskeletal 6A (553 aa).

Over residues 1–20 (MSTKTTIKSQTSHRGYSASS) the composition is skewed to polar residues. The disordered stretch occupies residues 1–21 (MSTKTTIKSQTSHRGYSASSA). Residues 1–151 (MSTKTTIKSQ…DPTIQRVRTE (151 aa)) are head. Residues 152-187 (EREQIKTLNNKFASFIDKVRFLEQQNKVLDTKWALL) form a coil 1A region. Residues 152–465 (EREQIKTLNN…KLLEGEECRL (314 aa)) enclose the IF rod domain. A linker 1 region spans residues 188 to 206 (QEQGTKTVRQNLEPMFEQY). Residues 207–298 (ISNLRRQLDS…ALYEAELSQM (92 aa)) are coil 1B. The interval 299–322 (QTHISDTSVVLSMDNNRSLDLDSI) is linker 12. The segment at 323-461 (IAEVKAQYED…ATYRKLLEGE (139 aa)) is coil 2. The tail stretch occupies residues 462–553 (ECRLNGEGVG…TSSSKKSYRQ (92 aa)). The disordered stretch occupies residues 528–553 (LSSSGGLSSSTIKYTTTSSSKKSYRQ). A compositionally biased stretch (low complexity) spans 531 to 553 (SGGLSSSTIKYTTTSSSKKSYRQ).

Belongs to the intermediate filament family. Heterodimer of a type I and a type II keratin. KRT6 isomers associate with KRT16 and/or KRT17. Interacts with TCHP. In terms of tissue distribution, predominates in the adult trunk skin, tongue, trachea/esophagus and eye. In adult skin, localization is restricted to hair follicles, where it is localized predominantly in the outer root sheath.

Functionally, epidermis-specific type I keratin involved in wound healing. Involved in the activation of follicular keratinocytes after wounding, while it does not play a major role in keratinocyte proliferation or migration. Participates in the regulation of epithelial migration by inhibiting the activity of SRC during wound repair. This chain is Keratin, type II cytoskeletal 6A (Krt6a), found in Mus musculus (Mouse).